The primary structure comprises 206 residues: FKBP-type 22 kDa peptidyl-prolyl cis-trans isomerase (206 aa).

The PPIase FKBP-type domain occupies 120–206 (TDRVRVHYTG…VFEVELLEIL (87 aa)).

In terms of assembly, homodimer.

The protein resides in the cytoplasm. Its subcellular location is the periplasm. The catalysed reaction is [protein]-peptidylproline (omega=180) = [protein]-peptidylproline (omega=0). With respect to regulation, strongly inhibited by FK506. Its function is as follows. PPIases accelerate the folding of proteins. Catalyzes the cis-trans isomerization of proline imidic peptide bonds in oligopeptides. Displays a preference for substrates with a lysyl residue in the P1 position. In Escherichia coli (strain K12), this protein is FKBP-type 22 kDa peptidyl-prolyl cis-trans isomerase (fklB).